The chain runs to 665 residues: Methionine--tRNA ligase (665 aa).

The short motif at 13–23 (YYPSGKLHIGS) is the 'HIGH' region element. The 'KMSKS' region signature appears at 309 to 313 (KMSKS). Lysine 312 serves as a coordination point for ATP. Residues 562 to 665 (DFDKVEIRVA…PAVPNGSVIG (104 aa)) form the tRNA-binding domain.

It belongs to the class-I aminoacyl-tRNA synthetase family. MetG type 2B subfamily. In terms of assembly, homodimer.

It localises to the cytoplasm. It carries out the reaction tRNA(Met) + L-methionine + ATP = L-methionyl-tRNA(Met) + AMP + diphosphate. Is required not only for elongation of protein synthesis but also for the initiation of all mRNA translation through initiator tRNA(fMet) aminoacylation. The polypeptide is Methionine--tRNA ligase (metG) (Streptococcus pneumoniae serotype 4 (strain ATCC BAA-334 / TIGR4)).